The chain runs to 565 residues: NAD-dependent malic enzyme (565 aa).

Catalysis depends on Y104, which acts as the Proton donor. R157 is an NAD(+) binding site. Residue K175 is the Proton acceptor of the active site. 3 residues coordinate a divalent metal cation: E246, D247, and D270. The NAD(+) site is built by D270 and N418.

The protein belongs to the malic enzymes family. As to quaternary structure, homotetramer. Requires Mg(2+) as cofactor. Mn(2+) is required as a cofactor.

The enzyme catalyses (S)-malate + NAD(+) = pyruvate + CO2 + NADH. It carries out the reaction oxaloacetate + H(+) = pyruvate + CO2. The sequence is that of NAD-dependent malic enzyme from Salmonella arizonae (strain ATCC BAA-731 / CDC346-86 / RSK2980).